A 232-amino-acid polypeptide reads, in one-letter code: Clarin-2 (232 aa).

Helical transmembrane passes span 8–28, 101–121, 139–159, and 188–208; these read VWYG…IVAL, ILLL…FAIL, LWNV…MAAV, and SFWI…VVAI.

The protein belongs to the clarin family. As to expression, detected in inner ear, particularly in hair bundles of auditory hair cells and is enriched in apical stereocilia. Detected in eye, but not in brain or muscle.

The protein resides in the cell projection. It is found in the stereocilium membrane. In terms of biological role, plays a key role to hearing function. Required for normal organization and maintenance of the stereocilia bundle and for mechano-electrical transduction. In Mus musculus (Mouse), this protein is Clarin-2.